Consider the following 476-residue polypeptide: Glutamyl-tRNA(Gln) amidotransferase subunit A (476 aa).

Catalysis depends on charge relay system residues K76 and S151. Residue S175 is the Acyl-ester intermediate of the active site.

The protein belongs to the amidase family. GatA subfamily. In terms of assembly, heterotrimer of A, B and C subunits.

It carries out the reaction L-glutamyl-tRNA(Gln) + L-glutamine + ATP + H2O = L-glutaminyl-tRNA(Gln) + L-glutamate + ADP + phosphate + H(+). Its function is as follows. Allows the formation of correctly charged Gln-tRNA(Gln) through the transamidation of misacylated Glu-tRNA(Gln) in organisms which lack glutaminyl-tRNA synthetase. The reaction takes place in the presence of glutamine and ATP through an activated gamma-phospho-Glu-tRNA(Gln). In Chlorobium phaeobacteroides (strain DSM 266 / SMG 266 / 2430), this protein is Glutamyl-tRNA(Gln) amidotransferase subunit A.